A 144-amino-acid polypeptide reads, in one-letter code: Transcriptional regulator SlyA (144 aa).

The region spanning 2 to 135 is the HTH marR-type domain; it reads ESPLGSDLSR…LSQMISKLEK (134 aa). A DNA-binding region (H-T-H motif) is located at residues 49–72; it reads QIQLAKAIGIEQPSLVRTLDQLEE.

It belongs to the SlyA family. As to quaternary structure, homodimer.

Its function is as follows. Transcription regulator that can specifically activate or repress expression of target genes. The sequence is that of Transcriptional regulator SlyA from Wigglesworthia glossinidia brevipalpis.